A 275-amino-acid polypeptide reads, in one-letter code: 4-hydroxy-tetrahydrodipicolinate reductase (275 aa).

NAD(+) is bound by residues 13–18 (GAAGKM) and 108–110 (GTT). His-164 acts as the Proton donor/acceptor in catalysis. His-165 contributes to the (S)-2,3,4,5-tetrahydrodipicolinate binding site. Lys-168 acts as the Proton donor in catalysis. 174 to 175 (GT) is a binding site for (S)-2,3,4,5-tetrahydrodipicolinate.

The protein belongs to the DapB family.

The protein localises to the cytoplasm. It carries out the reaction (S)-2,3,4,5-tetrahydrodipicolinate + NAD(+) + H2O = (2S,4S)-4-hydroxy-2,3,4,5-tetrahydrodipicolinate + NADH + H(+). It catalyses the reaction (S)-2,3,4,5-tetrahydrodipicolinate + NADP(+) + H2O = (2S,4S)-4-hydroxy-2,3,4,5-tetrahydrodipicolinate + NADPH + H(+). The protein operates within amino-acid biosynthesis; L-lysine biosynthesis via DAP pathway; (S)-tetrahydrodipicolinate from L-aspartate: step 4/4. Functionally, catalyzes the conversion of 4-hydroxy-tetrahydrodipicolinate (HTPA) to tetrahydrodipicolinate. This Rippkaea orientalis (strain PCC 8801 / RF-1) (Cyanothece sp. (strain PCC 8801)) protein is 4-hydroxy-tetrahydrodipicolinate reductase.